The sequence spans 99 residues: High mobility group nucleosome-binding domain-containing protein 3 (99 aa).

3 stretches are compositionally biased toward basic and acidic residues: residues 1 to 25 (MPKRKSPENTEDKDGSKVTKQEPTR), 39 to 53 (PEPKPRKTSAKKEPG), and 62 to 72 (GKKEEKQEAGK). A disordered region spans residues 1–99 (MPKRKSPENT…KTESVDNEGE (99 aa)). Residue Ser-6 is modified to Phosphoserine. At Thr-10 the chain carries Phosphothreonine. Phosphoserine is present on residues Ser-78 and Ser-93. The span at 81-93 (GETKAEEAQKTES) shows a compositional bias: basic and acidic residues.

Belongs to the HMGN family. As to quaternary structure, interacts with the ligand binding domain of the thyroid receptor (TR) (in vitro). Requires the presence of thyroid hormone for its interaction. Interacts with transcriptional regulator SEHBP. Interacts with nucleosomes.

It is found in the nucleus. Functionally, binds to nucleosomes, regulating chromatin structure and consequently, chromatin-dependent processes such as transcription, DNA replication and DNA repair. Affects both insulin and glucagon levels and modulates the expression of pancreatic genes involved in insulin secretion. Regulates the expression of the glucose transporter SLC2A2 by binding specifically to its promoter region and recruiting PDX1 and additional transcription factors. Regulates the expression of SLC6A9, a glycine transporter which regulates the glycine concentration in synaptic junctions in the central nervous system, by binding to its transcription start site. May play a role in ocular development and astrocyte function. The polypeptide is High mobility group nucleosome-binding domain-containing protein 3 (HMGN3) (Pongo abelii (Sumatran orangutan)).